Here is a 478-residue protein sequence, read N- to C-terminus: ATP synthase subunit beta (478 aa).

Position 152 to 159 (152 to 159 (GGAGVGKT)) interacts with ATP.

Belongs to the ATPase alpha/beta chains family. F-type ATPases have 2 components, CF(1) - the catalytic core - and CF(0) - the membrane proton channel. CF(1) has five subunits: alpha(3), beta(3), gamma(1), delta(1), epsilon(1). CF(0) has three main subunits: a(1), b(2) and c(9-12). The alpha and beta chains form an alternating ring which encloses part of the gamma chain. CF(1) is attached to CF(0) by a central stalk formed by the gamma and epsilon chains, while a peripheral stalk is formed by the delta and b chains.

Its subcellular location is the cell membrane. The catalysed reaction is ATP + H2O + 4 H(+)(in) = ADP + phosphate + 5 H(+)(out). In terms of biological role, produces ATP from ADP in the presence of a proton gradient across the membrane. The catalytic sites are hosted primarily by the beta subunits. The sequence is that of ATP synthase subunit beta from Wolbachia pipientis subsp. Culex pipiens (strain wPip).